A 473-amino-acid polypeptide reads, in one-letter code: 3-isopropylmalate dehydratase large subunit (473 aa).

3 residues coordinate [4Fe-4S] cluster: cysteine 351, cysteine 414, and cysteine 417.

This sequence belongs to the aconitase/IPM isomerase family. LeuC type 1 subfamily. As to quaternary structure, heterodimer of LeuC and LeuD. [4Fe-4S] cluster is required as a cofactor.

It catalyses the reaction (2R,3S)-3-isopropylmalate = (2S)-2-isopropylmalate. The protein operates within amino-acid biosynthesis; L-leucine biosynthesis; L-leucine from 3-methyl-2-oxobutanoate: step 2/4. Functionally, catalyzes the isomerization between 2-isopropylmalate and 3-isopropylmalate, via the formation of 2-isopropylmaleate. This is 3-isopropylmalate dehydratase large subunit from Acidovorax ebreus (strain TPSY) (Diaphorobacter sp. (strain TPSY)).